Here is a 624-residue protein sequence, read N- to C-terminus: Methyl-accepting chemotaxis protein McpG (624 aa).

Residues 11-31 (ILLAASLIVILAFSLFTLYND) traverse the membrane as a helical segment. Residues 36–254 (NAIREDLENY…GLPSANWYIG (219 aa)) form the Cache domain. Residues 272–292 (SAVIATVVAVVIIIGLLGLLI) form a helical membrane-spanning segment. Residues 293–347 (RVLMQPLHTMTRAMEDIAEGEGDLTKRLHIHSHDEFGVLGNAFNRFVERIHSSIR) enclose the HAMP domain. Residues 352–588 (ATEQVNEVAL…AINMDINEIN (237 aa)) enclose the Methyl-accepting transducer domain.

It belongs to the methyl-accepting chemotaxis (MCP) protein family.

It localises to the cell membrane. In terms of biological role, chemotactic-signal transducers respond to changes in the concentration of attractants and repellents in the environment, transduce a signal from the outside to the inside of the cell, and facilitate sensory adaptation through the variation of the level of methylation. McpG is a specific gamma-aminobutyric acid (GABA) chemoreceptor that recognizes GABA over a wide range of environmental conditions. Contributes to attraction to and colonization of plant roots. The polypeptide is Methyl-accepting chemotaxis protein McpG (Pseudomonas putida (strain ATCC 47054 / DSM 6125 / CFBP 8728 / NCIMB 11950 / KT2440)).